Consider the following 699-residue polypeptide: Protein STRUBBELIG-RECEPTOR FAMILY 5 (699 aa).

Residues 1 to 22 form the signal peptide; it reads MTQKLVRLVIVSLAITVTLLQA. Residues 23–273 lie on the Extracellular side of the membrane; it reads KTDNQEVSAL…DGGGITAGTG (251 aa). 5 LRR repeats span residues 93–115, 116–136, 139–161, 163–186, and 187–209; these read SLTTFDLSKNNLKGNIPYQLPPN, IANLDFSENELDGNVPYSLSQ, NLQSINLGQNKLNGELPDMFQKL, KLETLDFSLNKLSGKLPQSFANLT, and SLKKLHLQDNRFTGDINVLRNLA. The N-linked (GlcNAc...) asparagine glycan is linked to N184. The tract at residues 239–263 is disordered; the sequence is NDWSTETAPPPPPGVKYGRKSSGSK. A helical membrane pass occupies residues 274-294; that stretch reads MVIAGACLGVLVLIIVLIALV. At 295-699 the chain is on the cytoplasmic side; the sequence is SKKKSSLSPH…SYRAHDDYDY (405 aa). S368 is modified (phosphoserine). One can recognise a Protein kinase domain in the interval 404 to 675; the sequence is FSPGNLLGEG…SEVVEALVRM (272 aa). ATP is bound by residues 410-418 and K432; that span reads LGEGSIGRV.

It belongs to the protein kinase superfamily. Ser/Thr protein kinase family. In terms of tissue distribution, expressed in leaves and flowers.

Its subcellular location is the membrane. The chain is Protein STRUBBELIG-RECEPTOR FAMILY 5 (SRF5) from Arabidopsis thaliana (Mouse-ear cress).